Here is a 152-residue protein sequence, read N- to C-terminus: MAEAARRQGGGRPLPPPPRGVNQQPPRPKPEPVDREKTCPLLLRVFTKSGGHHTSEDYAVRGKEPKDEVQIYTWKDASLRELTDLVKEVSVAARRRNARLSFAFVYPNNKGGYNVREVGETMAYPNRKQPDDSKTLSELPFEIGDYLDVAIY.

A disordered region spans residues 1–38 (MAEAARRQGGGRPLPPPPRGVNQQPPRPKPEPVDREKT). Residues 28-38 (PKPEPVDREKT) show a composition bias toward basic and acidic residues.

This sequence belongs to the SAP18 family. Interacts with SIN3, ERF3, ERF4 and HDA19. In terms of tissue distribution, ubiquitous, with low level in flowers.

In terms of biological role, links the histone deacetylase complex to transcriptional repressors bound to chromatin. Involved in the tethering of the SIN3 complex to core histone proteins. The sequence is that of Histone deacetylase complex subunit SAP18 from Arabidopsis thaliana (Mouse-ear cress).